A 493-amino-acid polypeptide reads, in one-letter code: Glutamyl-tRNA(Gln) amidotransferase subunit A (493 aa).

Active-site charge relay system residues include K79 and S159. Catalysis depends on S183, which acts as the Acyl-ester intermediate.

Belongs to the amidase family. GatA subfamily. In terms of assembly, heterotrimer of A, B and C subunits.

It carries out the reaction L-glutamyl-tRNA(Gln) + L-glutamine + ATP + H2O = L-glutaminyl-tRNA(Gln) + L-glutamate + ADP + phosphate + H(+). Allows the formation of correctly charged Gln-tRNA(Gln) through the transamidation of misacylated Glu-tRNA(Gln) in organisms which lack glutaminyl-tRNA synthetase. The reaction takes place in the presence of glutamine and ATP through an activated gamma-phospho-Glu-tRNA(Gln). The sequence is that of Glutamyl-tRNA(Gln) amidotransferase subunit A from Brucella anthropi (strain ATCC 49188 / DSM 6882 / CCUG 24695 / JCM 21032 / LMG 3331 / NBRC 15819 / NCTC 12168 / Alc 37) (Ochrobactrum anthropi).